Reading from the N-terminus, the 176-residue chain is MSSNQQPVVLGKLGSCHGIKGWLRITAYTDSVEGIFDYSPWLIKENGEWREVKVTQWRYQGKAVVAELEGVNTREQAQMLTNCEIAILPEQMDALPEDEFYWRDLIGCEVVNTTGYNMGIVDQIVETGSNDVLLVKANAKDSFGKVERMIPFVPEQFIKTVDVQGKQILVDWDPDF.

One can recognise a PRC barrel domain in the interval 97 to 176; it reads EDEFYWRDLI…QILVDWDPDF (80 aa).

Belongs to the RimM family. As to quaternary structure, binds ribosomal protein uS19.

The protein resides in the cytoplasm. Functionally, an accessory protein needed during the final step in the assembly of 30S ribosomal subunit, possibly for assembly of the head region. Essential for efficient processing of 16S rRNA. May be needed both before and after RbfA during the maturation of 16S rRNA. It has affinity for free ribosomal 30S subunits but not for 70S ribosomes. The polypeptide is Ribosome maturation factor RimM (Shewanella putrefaciens (strain CN-32 / ATCC BAA-453)).